Reading from the N-terminus, the 64-residue chain is Large ribosomal subunit protein bL35 (64 aa).

The protein belongs to the bacterial ribosomal protein bL35 family.

In Acinetobacter baylyi (strain ATCC 33305 / BD413 / ADP1), this protein is Large ribosomal subunit protein bL35.